A 136-amino-acid polypeptide reads, in one-letter code: Sec-independent protein translocase protein TatB (136 aa).

The helical transmembrane segment at Met1–Gly21 threads the bilayer. Residues Ala66 to Glu136 form a disordered region. 2 stretches are compositionally biased toward basic and acidic residues: residues Glu77–Ala89 and Tyr96–Leu107. The segment covering Asp108 to Pro130 has biased composition (polar residues).

This sequence belongs to the TatB family. The Tat system comprises two distinct complexes: a TatABC complex, containing multiple copies of TatA, TatB and TatC subunits, and a separate TatA complex, containing only TatA subunits. Substrates initially bind to the TatABC complex, which probably triggers association of the separate TatA complex to form the active translocon.

The protein localises to the cell inner membrane. Its function is as follows. Part of the twin-arginine translocation (Tat) system that transports large folded proteins containing a characteristic twin-arginine motif in their signal peptide across membranes. Together with TatC, TatB is part of a receptor directly interacting with Tat signal peptides. TatB may form an oligomeric binding site that transiently accommodates folded Tat precursor proteins before their translocation. This chain is Sec-independent protein translocase protein TatB, found in Psychromonas ingrahamii (strain DSM 17664 / CCUG 51855 / 37).